Here is a 322-residue protein sequence, read N- to C-terminus: MQPSGWAAAREAAGRDMLAADLRCSLFASALQSYKRDSVLRPFPASYARGDCKDFEALLADASKLPNLKELLQSSGDNHKRAWDLVSWILSSKVLTIHSAGKAEFEKIQKLTGAPHTPVPAPDFLFEIEYFDPANAKFYETKGERDLIYAFHGSRLENFHSIIHNGLHCHLNKTSLFGEGTYLTSDLSLALIYSPHGHGWQHSLLGPILSCVAVCEVIDHPDVKCQTKKKDSKEIDRRRARIKHSEGGDIPPKYFVVTNNQLLRVKYLLVYSQKPPKRASSQLSWFSSHWFTVMISLYLLLLLIVSVINSSAFQHFWNRAKR.

Topologically, residues 1–287 (MQPSGWAAAR…RASSQLSWFS (287 aa)) are cytoplasmic. One can recognise a PARP alpha-helical domain in the interval 5–91 (GWAAAREAAG…AWDLVSWILS (87 aa)). The residue at position 37 (Asp-37) is an ADP-ribosyl aspartic acid. Glu-70 is subject to ADP-ribosyl glutamic acid. The 186-residue stretch at 94 to 279 (VLTIHSAGKA…VYSQKPPKRA (186 aa)) folds into the PARP catalytic domain. Lys-110 and Lys-137 each carry N6-(ADP-ribosyl)lysine. NAD(+) is bound by residues His-152, Tyr-182, and Tyr-254. A helical transmembrane segment spans residues 288–308 (SHWFTVMISLYLLLLLIVSVI). At 309–322 (NSSAFQHFWNRAKR) the chain is on the lumenal side.

It belongs to the ARTD/PARP family. Interacts with KPNB1. Auto-mono-ADP-ribosylated.

The protein resides in the endoplasmic reticulum membrane. The enzyme catalyses L-aspartyl-[protein] + NAD(+) = 4-O-(ADP-D-ribosyl)-L-aspartyl-[protein] + nicotinamide. It catalyses the reaction L-glutamyl-[protein] + NAD(+) = 5-O-(ADP-D-ribosyl)-L-glutamyl-[protein] + nicotinamide. The catalysed reaction is L-lysyl-[protein] + NAD(+) = N(6)-(ADP-D-ribosyl)-L-lysyl-[protein] + nicotinamide + H(+). In absence of activation signal, PARP16 is autoinhibited by the PARP alpha-helical domain (also named HD region), which prevents effective NAD(+)-binding. Activity is highly stimulated by signals, which unfold the PARP alpha-helical domain, relieving autoinhibition. Functionally, intracellular mono-ADP-ribosyltransferase that plays a role in different processes, such as protein translation and unfolded protein response (UPR), through the mono-ADP-ribosylation of proteins involved in those processes. Acts as an inhibitor of protein translation by catalyzing mono-ADP-ribosylation of ribosomal subunits, such as RPL14 and RPS6, thereby inhibiting polysome assembly and mRNA loading. Mono-ADP-ribosylation of ribosomal subunits is promoted by NMNAT2. Involved in the unfolded protein response (UPR) by ADP-ribosylating and activating EIF2AK3 and ERN1, two important UPR effectors. May also mediate mono-ADP-ribosylation of karyopherin KPNB1 a nuclear import factor. May not modify proteins on arginine or cysteine residues compared to other mono-ADP-ribosyltransferases. The chain is Protein mono-ADP-ribosyltransferase PARP16 from Homo sapiens (Human).